A 359-amino-acid polypeptide reads, in one-letter code: uncharacterized protein (359 aa).

The Protein kinase domain maps to tyrosine 43–glycine 309. ATP-binding positions include leucine 49 to valine 57 and lysine 72. Residue aspartate 163 is the Proton acceptor of the active site. Residues arginine 314–proline 359 are disordered. The span at glycine 350–proline 359 shows a compositional bias: gly residues.

This sequence belongs to the protein kinase superfamily. Ser/Thr protein kinase family. STKL subfamily.

The enzyme catalyses L-seryl-[protein] + ATP = O-phospho-L-seryl-[protein] + ADP + H(+). It catalyses the reaction L-threonyl-[protein] + ATP = O-phospho-L-threonyl-[protein] + ADP + H(+). This is an uncharacterized protein from Homo sapiens (Human).